A 2032-amino-acid chain; its full sequence is Transient receptor potential channel (2032 aa).

Residues 129 to 139 (KKTRKHRRRRS) show a composition bias toward basic residues. 5 disordered regions span residues 129–162 (KKTR…GHAI), 197–223 (QSKG…AVPT), 831–860 (KKAM…MGGV), 912–945 (ANPM…GSQT), and 1120–1211 (AAEH…EAGN). Composition is skewed to polar residues over residues 839 to 855 (SRPS…QSTE), 935 to 945 (SLTSASDGSQT), and 1120 to 1129 (AAEHQNDMNY). Low complexity predominate over residues 1130–1149 (SSSSSSSSSSSSSSSSSDSS). The span at 1171–1185 (TSQGSAQSLNITSLF) shows a compositional bias: polar residues. The next 5 membrane-spanning stretches (helical) occupy residues 1310–1330 (FWSW…TLLV), 1332–1352 (TPPR…AFGL), 1374–1394 (VCSF…VGFF), 1439–1459 (MIQN…SFGL), and 1535–1555 (LMTF…IAIF). Disordered regions lie at residues 1753-1779 (GTDP…RIRR), 1853-1909 (HPER…SRDQ), 1935-1982 (EEED…EEVD), and 1999-2032 (LNEE…CSDV). The segment covering 1935 to 1947 (EEEDEEEDDEEDD) has biased composition (acidic residues). Basic residues predominate over residues 1951–1962 (RHHIHPRRKSSR). Polar residues predominate over residues 2016-2032 (SPSSSRADLTSQKCSDV).

The protein belongs to the transient receptor (TC 1.A.4) family. LTrpC subfamily. Gonads.

The protein resides in the membrane. Its function is as follows. Required for initiation and continuation of postembryonic mitotic cell divisions of gonadal cells Z1 and Z4. Zygotic expression is necessary for hermaphrodite fertility. May be a cation channel. The sequence is that of Transient receptor potential channel (gon-2) from Caenorhabditis elegans.